The following is a 291-amino-acid chain: Ribose-phosphate pyrophosphokinase (291 aa).

ATP is bound by residues 34-36 (DGE) and 93-94 (RQ). Mg(2+) is bound by residues His127 and Asp165. Lys188 is a catalytic residue. Residues Arg190, Asp216, and 220 to 224 (STGGT) each bind D-ribose 5-phosphate.

The protein belongs to the ribose-phosphate pyrophosphokinase family. Class III (archaeal) subfamily. As to quaternary structure, homodimer. Mg(2+) is required as a cofactor.

The protein resides in the cytoplasm. The enzyme catalyses D-ribose 5-phosphate + ATP = 5-phospho-alpha-D-ribose 1-diphosphate + AMP + H(+). Its pathway is metabolic intermediate biosynthesis; 5-phospho-alpha-D-ribose 1-diphosphate biosynthesis; 5-phospho-alpha-D-ribose 1-diphosphate from D-ribose 5-phosphate (route I): step 1/1. Functionally, involved in the biosynthesis of the central metabolite phospho-alpha-D-ribosyl-1-pyrophosphate (PRPP) via the transfer of pyrophosphoryl group from ATP to 1-hydroxyl of ribose-5-phosphate (Rib-5-P). In Saccharolobus solfataricus (strain ATCC 35092 / DSM 1617 / JCM 11322 / P2) (Sulfolobus solfataricus), this protein is Ribose-phosphate pyrophosphokinase.